An 895-amino-acid polypeptide reads, in one-letter code: Stonin-2 (895 aa).

Disordered stretches follow at residues 15-119 (WVSF…PPHK), 145-222 (SESS…APPV), and 234-280 (EDNE…KSTL). Residues 64–73 (SHSEQDDSSE) show a composition bias toward basic and acidic residues. Residues 145 to 193 (SESSWTTHSEDTSSPSVAPSYTDLQLINTEEQASGRASGTDSTDNSSSL) are compositionally biased toward polar residues. Pro residues predominate over residues 241–251 (PSPPVPSPKKP). Thr253 is subject to Phosphothreonine. A phosphoserine mark is found at Ser278 and Ser299. 2 consecutive short sequence motifs (NPF) follow at residues 310-312 (NPF) and 326-328 (NPF). A disordered region spans residues 386 to 421 (QIDDPDPVGNTALPDDDPTASVELDAPSPASALSQP). Residues 424 to 557 (GWPMMLRIPE…DLPVLSMDLS (134 aa)) form the SHD domain. In terms of domain architecture, MHD spans 565–872 (EEEITVDVRD…AHYSYKVEIE (308 aa)). Ser759 carries the phosphoserine modification.

It belongs to the Stoned B family. Interacts with the second C2 domain of synaptotagmins SYT1 and SYT2. Interacts with EPS15, EPS15R and ITSN1. Interacts indirectly with the AP-2 adapter complex. Interacts with TOR1A and COPS4; the interaction controls STON2 protein stability. Post-translationally, phosphorylated in vitro by PKD. In terms of processing, neddylated; deneddylated via its interaction with the COP9 signalosome (CSN) complex through TOR1A and COPS4. Ubiquitinated; leading to its degradation.

It is found in the cytoplasm. It localises to the membrane. The protein resides in the synapse. The protein localises to the synaptosome. In terms of biological role, adapter protein involved in endocytic machinery. Involved in the synaptic vesicle recycling. May facilitate clathrin-coated vesicle uncoating. The sequence is that of Stonin-2 (Ston2) from Mus musculus (Mouse).